Reading from the N-terminus, the 92-residue chain is MPTNSIVTIRYGPYDSCGIVDHRTFRLDGLQAVLKGDGHRYVLEKTDDWNTVELIVNGERVYTCNITDLVFGGDGRLDPLCQEAIDAVREAY.

This sequence belongs to the UPF0728 family.

This chain is UPF0728 protein C10orf53 homolog, found in Danio rerio (Zebrafish).